We begin with the raw amino-acid sequence, 322 residues long: Peroxisomal adenine nucleotide carrier 1 (322 aa).

Solcar repeat units lie at residues 5-94, 104-184, and 202-298; these read LESV…FKRV, IGTK…LKQH, and LSAF…ITAT. The next 6 membrane-spanning stretches (helical) occupy residues 8-28, 104-124, 158-178, 201-221, 254-274, and 286-306; these read VSEA…LYPL, IGTK…SVLI, FDGL…YTVF, VLSA…ATVL, IPGV…FKGL, and ALLL…ILAI.

This sequence belongs to the mitochondrial carrier (TC 2.A.29) family. As to expression, expressed in stamens, pollen grains, seeds, leaves, cotyledons, roots, stems, flowers, hypocotyls and siliques.

The protein resides in the peroxisome membrane. Peroxisomal adenine nucleotide transporter catalyzing the counterexchange of ATP with AMP. ATP is needed by reactions that generate acyl-CoA for peroxisomal fatty acid beta-oxidation during postgerminative growth. Required for the beta-oxidation reactions involved in auxin biosynthesis and for the conversion of seed-reserved triacylglycerols into sucrose that is necessary for growth before the onset of photosynthesis. This Arabidopsis thaliana (Mouse-ear cress) protein is Peroxisomal adenine nucleotide carrier 1 (PNC1).